We begin with the raw amino-acid sequence, 221 residues long: Probable transaldolase (221 aa).

The active-site Schiff-base intermediate with substrate is the Lys83.

Belongs to the transaldolase family. Type 3B subfamily.

It is found in the cytoplasm. It carries out the reaction D-sedoheptulose 7-phosphate + D-glyceraldehyde 3-phosphate = D-erythrose 4-phosphate + beta-D-fructose 6-phosphate. The protein operates within carbohydrate degradation; pentose phosphate pathway; D-glyceraldehyde 3-phosphate and beta-D-fructose 6-phosphate from D-ribose 5-phosphate and D-xylulose 5-phosphate (non-oxidative stage): step 2/3. Functionally, transaldolase is important for the balance of metabolites in the pentose-phosphate pathway. The chain is Probable transaldolase from Herpetosiphon aurantiacus (strain ATCC 23779 / DSM 785 / 114-95).